Here is a 477-residue protein sequence, read N- to C-terminus: Trigger factor (477 aa).

Positions 163-248 (ENLVIFDYKA…ITEVKKSEEV (86 aa)) constitute a PPIase FKBP-type domain. A compositionally biased stretch (basic and acidic residues) spans 408 to 461 (KAKPSKKEISKEEAEKILKEHQKQDHNHEHDHNHDHDHPEEKKASKSTKIEKKP). A disordered region spans residues 408–477 (KAKPSKKEIS…KPSTKKVSKK (70 aa)).

This sequence belongs to the FKBP-type PPIase family. Tig subfamily.

It localises to the cytoplasm. The catalysed reaction is [protein]-peptidylproline (omega=180) = [protein]-peptidylproline (omega=0). Involved in protein export. Acts as a chaperone by maintaining the newly synthesized protein in an open conformation. Functions as a peptidyl-prolyl cis-trans isomerase. This is Trigger factor from Pelagibacter ubique (strain HTCC1062).